The primary structure comprises 554 residues: Glutamine--tRNA ligase (554 aa).

A 'HIGH' region motif is present at residues 33–43; that stretch reads PEPNGYLHIGH. ATP-binding positions include 34–36 and 40–46; these read EPN and HIGHAKS. Residues D66 and Y210 each coordinate L-glutamine. Residues T229, 259 to 260, and 267 to 269 each bind ATP; these read RL and MSK. The 'KMSKS' region motif lies at 266-270; the sequence is VMSKR.

The protein belongs to the class-I aminoacyl-tRNA synthetase family. As to quaternary structure, monomer.

It is found in the cytoplasm. The enzyme catalyses tRNA(Gln) + L-glutamine + ATP = L-glutaminyl-tRNA(Gln) + AMP + diphosphate. This Clostridioides difficile (strain 630) (Peptoclostridium difficile) protein is Glutamine--tRNA ligase.